Reading from the N-terminus, the 424-residue chain is UPF0597 protein Sbal223_1296 (424 aa).

Belongs to the UPF0597 family.

The protein is UPF0597 protein Sbal223_1296 of Shewanella baltica (strain OS223).